A 514-amino-acid chain; its full sequence is Chromosomal replication initiator protein DnaA (514 aa).

Positions 1-90 (MSVELWQQCV…KRSRTPRAAI (90 aa)) are domain I, interacts with DnaA modulators. The tract at residues 91–177 (VPSQTHVAPP…QVEGALKHTS (87 aa)) is domain II. The tract at residues 178–394 (YLNRTFTFEN…GALKRVIAHS (217 aa)) is domain III, AAA+ region. Residues G222, G224, K225, and T226 each contribute to the ATP site. The domain IV, binds dsDNA stretch occupies residues 395-514 (HFMGRPITIE…YKNLLRTLTT (120 aa)).

The protein belongs to the DnaA family. In terms of assembly, oligomerizes as a right-handed, spiral filament on DNA at oriC.

It is found in the cytoplasm. In terms of biological role, plays an essential role in the initiation and regulation of chromosomal replication. ATP-DnaA binds to the origin of replication (oriC) to initiate formation of the DNA replication initiation complex once per cell cycle. Binds the DnaA box (a 9 base pair repeat at the origin) and separates the double-stranded (ds)DNA. Forms a right-handed helical filament on oriC DNA; dsDNA binds to the exterior of the filament while single-stranded (ss)DNA is stabiized in the filament's interior. The ATP-DnaA-oriC complex binds and stabilizes one strand of the AT-rich DNA unwinding element (DUE), permitting loading of DNA polymerase. After initiation quickly degrades to an ADP-DnaA complex that is not apt for DNA replication. Binds acidic phospholipids. This chain is Chromosomal replication initiator protein DnaA, found in Pseudomonas aeruginosa (strain LESB58).